The following is a 292-amino-acid chain: uncharacterized protein (292 aa).

This is an uncharacterized protein from Aquifex aeolicus (strain VF5).